The following is a 620-amino-acid chain: 1-deoxy-D-xylulose-5-phosphate synthase (620 aa).

Thiamine diphosphate-binding positions include histidine 80 and 121 to 123 (GHS). Residue aspartate 152 coordinates Mg(2+). Thiamine diphosphate-binding positions include 153 to 154 (GA), asparagine 181, tyrosine 288, and glutamate 370. Residue asparagine 181 participates in Mg(2+) binding.

The protein belongs to the transketolase family. DXPS subfamily. Homodimer. Requires Mg(2+) as cofactor. The cofactor is thiamine diphosphate.

The enzyme catalyses D-glyceraldehyde 3-phosphate + pyruvate + H(+) = 1-deoxy-D-xylulose 5-phosphate + CO2. Its pathway is metabolic intermediate biosynthesis; 1-deoxy-D-xylulose 5-phosphate biosynthesis; 1-deoxy-D-xylulose 5-phosphate from D-glyceraldehyde 3-phosphate and pyruvate: step 1/1. Its function is as follows. Catalyzes the acyloin condensation reaction between C atoms 2 and 3 of pyruvate and glyceraldehyde 3-phosphate to yield 1-deoxy-D-xylulose-5-phosphate (DXP). The chain is 1-deoxy-D-xylulose-5-phosphate synthase from Shigella flexneri.